The sequence spans 60 residues: Large ribosomal subunit protein uL30 (60 aa).

The protein belongs to the universal ribosomal protein uL30 family. Part of the 50S ribosomal subunit.

The protein is Large ribosomal subunit protein uL30 of Symbiobacterium thermophilum (strain DSM 24528 / JCM 14929 / IAM 14863 / T).